Consider the following 245-residue polypeptide: Zinc finger protein AZF1 (245 aa).

The span at 1–15 (MALETLNSPTATTTA) shows a compositional bias: polar residues. Disordered stretches follow at residues 1-57 (MALE…NKNL) and 112-141 (LGGHKTSHRKPTNTSITSGNQELSNNSHSN). The C2H2-type 1 zinc-finger motif lies at 97–119 (YKCTVCGKSFSSYQALGGHKTSH). Residues 123 to 134 (TNTSITSGNQEL) show a composition bias toward polar residues. The segment at 164–186 (HTCSICFKSFASGQALGGHKRCH) adopts a C2H2-type 2 zinc-finger fold. A disordered region spans residues 193–231 (GNGNGSSSNSVELVAGSDVSDVDNERWSEESAIGGHRGF).

As to expression, highly expressed in roots and at lower levels in leaves and stems.

It is found in the nucleus. In terms of biological role, transcriptional repressor involved in the inhibition of plant growth under abiotic stress conditions. Can repress the expression of various genes, including osmotic stress and abscisic acid-repressive genes and auxin-inducible genes, by binding to their promoter regions in a DNA sequence-specific manner. The chain is Zinc finger protein AZF1 (AZF1) from Arabidopsis thaliana (Mouse-ear cress).